Here is a 123-residue protein sequence, read N- to C-terminus: WAP four-disulfide core domain protein 5 (123 aa).

The first 24 residues, Met1–Gly24, serve as a signal peptide directing secretion. WAP domains are found at residues Lys27 to Arg73 and Ile74 to Ala121. 8 cysteine pairs are disulfide-bonded: Cys34-Cys62, Cys41-Cys66, Cys49-Cys61, Cys55-Cys70, Cys81-Cys109, Cys88-Cys113, Cys96-Cys108, and Cys102-Cys117.

The protein localises to the secreted. In terms of biological role, putative acid-stable proteinase inhibitor. In Callithrix jacchus (White-tufted-ear marmoset), this protein is WAP four-disulfide core domain protein 5 (WFDC5).